Consider the following 418-residue polypeptide: AA11 family lytic polysaccharide monooxygenase B (418 aa).

Positions Met1 to Ala21 are cleaved as a signal peptide. The Cu(+) site is built by His22 and His82. 3 disulfide bridges follow: Cys50-Cys165, Cys87-Cys113, and Cys206-Cys240. Residues Asn120 and Asn134 are each glycosylated (N-linked (GlcNAc...) asparagine). Residues Asp226 to Thr345 form a disordered region. The span at Ser254 to Thr345 shows a compositional bias: low complexity.

Belongs to the polysaccharide monooxygenase AA11 family. Requires Cu(2+) as cofactor.

It localises to the secreted. Lytic polysaccharide monooxygenase (LPMO)-like protein that acts as a strict peroxygenase and does not catalyze a monooxygenase reaction. It is indeed hardly active on chitin, while being very active on soluble oligomers of N-acetylglucosamine. Cleaves the glycosidic bonds byoxidizing the C1 position. Also unable to oxidize cellopentaose. Probably breaks glycosidic bonds in non-polymeric substrates possibly carbohydrates in the cell wall of the fungus or its competitors. In the presence of chitotetraose, the enzyme can withstand considerable amounts of H(2)O(2), which it uses to efficiently and stoichiometrically convert this substrate. This Aspergillus fumigatus (strain ATCC MYA-4609 / CBS 101355 / FGSC A1100 / Af293) (Neosartorya fumigata) protein is AA11 family lytic polysaccharide monooxygenase B.